Reading from the N-terminus, the 267-residue chain is MNALLTNPFKERLRKGEVQIGLWLSSTTSYMAEIAATSGYDWLLIDGEHAPNTIQDLYHQLQAVAPYASQPVIRPVEGSKSLIKQVLDIGAQTLLIPMVDTADQARQVVSATRYPPYGERGVGASVARAARWGRIENYMAQVNDSLCLLVQVESKTALDNLDEILDVEGIDGVFIGPADLSASLGYPDNAGHPEVQRIIETSIRRIRAAGKAAGFLAVAPDMAQQCLAWGANFVAVGVDTMLYSDALDQRLAMFKSGKNGPRIKGSY.

His49 acts as the Proton acceptor in catalysis. Residue Gln151 coordinates substrate. Glu153 is a binding site for Mg(2+). Residues Ala178 and Asp179 each contribute to the substrate site. Asp179 serves as a coordination point for Mg(2+).

This sequence belongs to the HpcH/HpaI aldolase family. KDR aldolase subfamily. In terms of assembly, homohexamer. Mg(2+) is required as a cofactor.

The enzyme catalyses 2-dehydro-3-deoxy-L-rhamnonate = (S)-lactaldehyde + pyruvate. Its function is as follows. Catalyzes the reversible retro-aldol cleavage of 2-keto-3-deoxy-L-rhamnonate (KDR) to pyruvate and lactaldehyde. The chain is 2-keto-3-deoxy-L-rhamnonate aldolase from Escherichia coli O17:K52:H18 (strain UMN026 / ExPEC).